The primary structure comprises 423 residues: F-box/LRR-repeat protein 2 (423 aa).

The F-box domain maps to 9-55 (GRINKKLPKELLLRIFSFLDIVTLCRCAQISKAWNILALDGSNWQRI). LRR repeat units lie at residues 61–87 (QTDVEGRVVENISKRCGGFLRKLSLRG), 88–113 (CIGVGDSSLKTFAQNCRNIEHLNLNG), 114–139 (CTKITDSTCYSLSRFCSKLKHLDLTS), 140–165 (CVSITNSSLKGISEGCRNLEYLNLSW), 166–191 (CDQITKDGIEALVRGCRGLKALLLRG), 192–217 (CTQLEDEALKHIQNYCHELVSLNLQS), 218–243 (CSRITDEGVVQICRGCHRLQALCLSG), 244–269 (CSNLTDASLTALGLNCPRLQILEAAR), 270–295 (CSHLTDAGFTLLARNCHELEKMDLEE), 296–321 (CILITDSTLIQLSIHCPKLQALSLSH), 322–350 (CELITDDGILHLSNSTCGHERLRVLELDN), 351–375 (CLLITDVALEHLENCRGLERLELYD), and 376–401 (CQQVTRAGIKRMRAQLPHVKVHAYFA). Positions 80–90 (LRKLSLRGCIG) are interaction with Calmodulin. K201 participates in a covalent cross-link: Glycyl lysine isopeptide (Lys-Gly) (interchain with G-Cter in ubiquitin). T404 is subject to Phosphothreonine. A lipid anchor (S-geranylgeranyl cysteine) is attached at C420. The CAAX motif motif lies at 420 to 423 (CVIL).

In terms of assembly, part of the SCF (SKP1-CUL1-F-box) E3 ubiquitin-protein ligase complex SCF(FBXL2) composed of CUL1, SKP1, RBX1 and FBXL2. Interacts with calmodulin; may antagonize substrate ubiquitination by SCF(FBXL2). May interact with PIK3R1. Interacts with PTPN13. Post-translationally, phosphorylated by GSK-beta (GSK3B), promoting recognition by FBXO3, leading to its ubiquitination by the SCF(FBXO3) complex. Ubiquitinated at Lys-201 by the SCF(FBXO3) complex in response to lipopolysaccharide (LPS), leading to its degradation by the proteasome.

The protein localises to the membrane. It participates in protein modification; protein ubiquitination. Functionally, calcium-activated substrate recognition component of the SCF (SKP1-cullin-F-box protein) E3 ubiquitin-protein ligase complex, SCF(FBXL2), which mediates the ubiquitination and subsequent proteasomal degradation of target proteins. Unlike many F-box proteins, FBXL2 does not seem to target phosphodegron within its substrates but rather calmodulin-binding motifs and is thereby antagonized by calmodulin. This is the case for the cyclins CCND2 and CCND3 which polyubiquitination and subsequent degradation are inhibited by calmodulin. Through CCND2 and CCND3 degradation induces cell-cycle arrest in G(0). SCF(FBXL2) also mediates PIK3R2 ubiquitination and proteasomal degradation thereby regulating phosphatidylinositol 3-kinase signaling and autophagy. PCYT1A monoubiquitination by SCF(FBXL2) and subsequent degradation regulates synthesis of phosphatidylcholine, which is utilized for formation of membranes and of pulmonary surfactant. The SCF(FBXL2) complex acts as a regulator of inflammation by mediating ubiquitination and degradation of TRAF proteins (TRAF1, TRAF2, TRAF3, TRAF4, TRAF5 and TRAF6). The SCF(FBXL2) complex acts as a negative regulator of the NLRP3 inflammasome by mediating ubiquitination and degradation of NLRP3. In Pongo abelii (Sumatran orangutan), this protein is F-box/LRR-repeat protein 2.